The sequence spans 1053 residues: Probable sucrose-phosphate synthase (1053 aa).

A compositionally biased stretch (basic and acidic residues) spans 103–115 (RRQERERGRREAV). Disordered regions lie at residues 103 to 127 (RRQE…EGEK) and 673 to 693 (LRSI…DSLR).

It belongs to the glycosyltransferase 1 family. As to quaternary structure, homodimer or homotetramer.

The enzyme catalyses beta-D-fructose 6-phosphate + UDP-alpha-D-glucose = sucrose 6(F)-phosphate + UDP + H(+). It participates in glycan biosynthesis; sucrose biosynthesis; sucrose from D-fructose 6-phosphate and UDP-alpha-D-glucose: step 1/2. Its activity is regulated as follows. Activity is regulated by phosphorylation and moderated by concentration of metabolites and light. Functionally, plays a role in photosynthetic sucrose synthesis by catalyzing the rate-limiting step of sucrose biosynthesis from UDP-glucose and fructose- 6-phosphate. Involved in the regulation of carbon partitioning in the leaves of plants. May regulate the synthesis of sucrose and therefore play a major role as a limiting factor in the export of photoassimilates out of the leaf. Plays a role for sucrose availability that is essential for plant growth and fiber elongation. The sequence is that of Probable sucrose-phosphate synthase (SPS) from Solanum tuberosum (Potato).